Here is a 555-residue protein sequence, read N- to C-terminus: Phosphoglucomutase (555 aa).

Substrate contacts are provided by residues T45, R49, 148–149 (SH), and K158. The active-site Phosphoserine intermediate is the S148. S148 contributes to the Mg(2+) binding site. D306, D308, and D310 together coordinate Mg(2+). Substrate is bound by residues 310–311 (DR) and 393–395 (EES).

Belongs to the phosphohexose mutase family. It depends on Mg(2+) as a cofactor.

The catalysed reaction is alpha-D-glucose 1-phosphate = alpha-D-glucose 6-phosphate. Functionally, this enzyme participates in both the breakdown and synthesis of glucose. This Komagataeibacter xylinus (Gluconacetobacter xylinus) protein is Phosphoglucomutase (celB).